A 491-amino-acid chain; its full sequence is Glutamate--tRNA ligase (491 aa).

The short motif at 13-23 (PSPTGFLHIGN) is the 'HIGH' region element. Positions 110, 112, 137, and 139 each coordinate Zn(2+). A 'KMSKS' region motif is present at residues 254 to 258 (KLSKR). Lysine 257 contacts ATP.

It belongs to the class-I aminoacyl-tRNA synthetase family. Glutamate--tRNA ligase type 1 subfamily. As to quaternary structure, monomer. Zn(2+) is required as a cofactor.

Its subcellular location is the cytoplasm. It carries out the reaction tRNA(Glu) + L-glutamate + ATP = L-glutamyl-tRNA(Glu) + AMP + diphosphate. Its function is as follows. Catalyzes the attachment of glutamate to tRNA(Glu) in a two-step reaction: glutamate is first activated by ATP to form Glu-AMP and then transferred to the acceptor end of tRNA(Glu). The sequence is that of Glutamate--tRNA ligase from Listeria monocytogenes serotype 4b (strain F2365).